Here is a 249-residue protein sequence, read N- to C-terminus: Probable cobalt-factor III C(17)-methyltransferase (249 aa).

Belongs to the precorrin methyltransferase family.

The enzyme catalyses Co(II)-factor III + S-adenosyl-L-methionine + H(+) = Co(II)-factor IV + S-adenosyl-L-homocysteine. It participates in cofactor biosynthesis; adenosylcobalamin biosynthesis; cob(II)yrinate a,c-diamide from sirohydrochlorin (anaerobic route): step 3/10. In terms of biological role, methyltransferase that likely catalyzes the ring contraction and methylation of C-17 in cobalt-factor III to form cobalt-factor IV. May also convert cobalt-precorrin-3 to cobalt-precorrin-4. This Methanocaldococcus jannaschii (strain ATCC 43067 / DSM 2661 / JAL-1 / JCM 10045 / NBRC 100440) (Methanococcus jannaschii) protein is Probable cobalt-factor III C(17)-methyltransferase (cbiH).